Reading from the N-terminus, the 638-residue chain is FSPSTTRLESRVRELEDMLDLERDARVRAERHAADMSFQVDALSERLDEAGGNSSQTHELLKRREMEIGKLRKDLENANASLEMAETSMRRRHQTALNELAAEVENLQKQKGKAEKDKNSLIMEVGNVLGQLDGALKAKQSAESKLEGLDAQLNRLKGLTDDLQRQLNDLNAAKARLTSENFELLHANQEYEAQVLNLSKSRSSLESAVDDLKRSLDDEAKSRFNLQAQLTSLQMDYDNLQAKYEEESEEASNLRNQVSKFNADLAAMKSKFERELMSKTEEYEELKRKLTLRITELEDTAERERARASNLEKIKAKLTIEIKDLQNEVDSLSAENAELARRAKAAENLANDLQRRVDELTIEINNLHSQNSQLEAENMRLKSQVNDLVDKNAALDRENRQLSDQVKDLKSTLRDANRRLTDLEALRSQLEAERDNLASALHDAEEALREVDQKYQNAQAALNHLKSEMEQRLREKDEELETLRKSTTRTIEELTVTITEMEVKYKSELSRLKKRYESNIAELELQLDTANKANANLMKENKTLAQRVKDLEAFLEEERRLREAAESNLQASERKRIQLSSEVEELRGALEAADRARKHAENEMNEAQTRVSELTMQVNTLTNDKRRLEGDISVMQAD.

Positions 1 to 638 form a coiled coil; it reads FSPSTTRLES…EGDISVMQAD (638 aa).

It belongs to the paramyosin family. Homodimer.

The protein resides in the cytoplasm. Its subcellular location is the myofibril. In terms of biological role, paramyosin is a major structural component of many thick filaments isolated from invertebrate muscles. This is Paramyosin from Opisthorchis felineus.